A 418-amino-acid chain; its full sequence is Putative ion-transport protein YfeO (418 aa).

The next 12 helical transmembrane spans lie at 10-30 (LLLS…LIVV), 54-74 (DSPL…GLVI), 99-119 (ALPG…SLGP), 120-140 (EHPI…RLLP), 149-169 (ILAS…AALI), 186-206 (LFAP…FFHP), 223-243 (ILSG…AVWC), 258-278 (VLVL…GGPV), 300-320 (DYFL…ASGF), 322-342 (GGRI…LHEH), 343-363 (VPAV…VLVV), and 371-391 (LFMA…CIVM).

The protein belongs to the chloride channel (TC 2.A.49) family.

Its subcellular location is the cell membrane. The chain is Putative ion-transport protein YfeO from Shigella boydii serotype 4 (strain Sb227).